A 704-amino-acid chain; its full sequence is ATP-dependent zinc metalloprotease FtsH (704 aa).

Over 1–17 (MADSAKTPRGKKRRPFT) the chain is Cytoplasmic. Residues 18–38 (GLALWIIVALLLGMAMFSLFG) traverse the membrane as a helical segment. The Extracellular segment spans residues 39 to 127 (RDGYQQIDTQ…DEIASSSWWS (89 aa)). A helical membrane pass occupies residues 128-148 (TLLLSFLPLLIFIGLFWFLIM). Over 149-704 (NAQGGGKAMQ…GSAGTDGTGR (556 aa)) the chain is Cytoplasmic. An ATP-binding site is contributed by 217–224 (GPPGTGKT). Residue His-439 coordinates Zn(2+). The active site involves Glu-440. Residues His-443 and Asp-515 each contribute to the Zn(2+) site. The segment at 624-704 (PREVWISSTE…GSAGTDGTGR (81 aa)) is disordered. A compositionally biased stretch (gly residues) spans 681 to 704 (PHGGEPGGGGYGYDGSAGTDGTGR).

The protein in the central section; belongs to the AAA ATPase family. It in the C-terminal section; belongs to the peptidase M41 family. As to quaternary structure, homohexamer. Requires Zn(2+) as cofactor.

Its subcellular location is the cell membrane. Functionally, acts as a processive, ATP-dependent zinc metallopeptidase for both cytoplasmic and membrane proteins. Plays a role in the quality control of integral membrane proteins. This chain is ATP-dependent zinc metalloprotease FtsH, found in Brachybacterium faecium (strain ATCC 43885 / DSM 4810 / JCM 11609 / LMG 19847 / NBRC 14762 / NCIMB 9860 / 6-10).